A 347-amino-acid chain; its full sequence is NADH-ubiquinone oxidoreductase chain 2 (347 aa).

A run of 11 helical transmembrane segments spans residues 1–21, 25–45, 55–75, 96–116, 123–143, 145–165, 178–198, 200–220, 237–257, 274–294, and 324–344; these read MNPLAQPIIYSTIFAGTLITA, HWFLTWVGLEMNMLAFIPVLT, AAIKYFLVQATASMILMMAIL, TMMLMALAMKLGMAPFHFWVP, TLMSGLLLLTWQKLAPISIMY, IFPVVNVNILLAFSILSIMVG, ILAYSSITHVGWMMAVLPYNP, ITIFNLIIYIVLTTTAFLALN, LTWLLPLIPSTLLSLGGLPPL, GTLIIPTAMAIITLINLYFYM, and FLLPTLMTLTTLLLPIAPLTF.

The protein belongs to the complex I subunit 2 family. In terms of assembly, core subunit of respiratory chain NADH dehydrogenase (Complex I) which is composed of 45 different subunits. Interacts with TMEM242.

The protein localises to the mitochondrion inner membrane. The enzyme catalyses a ubiquinone + NADH + 5 H(+)(in) = a ubiquinol + NAD(+) + 4 H(+)(out). Core subunit of the mitochondrial membrane respiratory chain NADH dehydrogenase (Complex I) which catalyzes electron transfer from NADH through the respiratory chain, using ubiquinone as an electron acceptor. Essential for the catalytic activity and assembly of complex I. The polypeptide is NADH-ubiquinone oxidoreductase chain 2 (Hylobates lar (Lar gibbon)).